The chain runs to 236 residues: 2-C-methyl-D-erythritol 4-phosphate cytidylyltransferase (236 aa).

Belongs to the IspD/TarI cytidylyltransferase family. IspD subfamily. Homodimer.

The enzyme catalyses 2-C-methyl-D-erythritol 4-phosphate + CTP + H(+) = 4-CDP-2-C-methyl-D-erythritol + diphosphate. Its pathway is isoprenoid biosynthesis; isopentenyl diphosphate biosynthesis via DXP pathway; isopentenyl diphosphate from 1-deoxy-D-xylulose 5-phosphate: step 2/6. Catalyzes the formation of 4-diphosphocytidyl-2-C-methyl-D-erythritol from CTP and 2-C-methyl-D-erythritol 4-phosphate (MEP). This chain is 2-C-methyl-D-erythritol 4-phosphate cytidylyltransferase, found in Escherichia coli O139:H28 (strain E24377A / ETEC).